Consider the following 187-residue polypeptide: MEVILLERIEKLGQMGDVVNVKPGFARNFLLPQKKALRASKANLAFFEKQRVQLEALNLKRRDEAQAVADKMTGLSVLMVRQAGESGMLYGSVSGKDVADAVKAAGFTIERRMVNLDQPIKTLGSYGVRVSLHPEVSVVVTINVARSAEEAERAAAAAAAAAEVVEAEEAPAEEDVAAEETSEAAEA.

Positions 168-187 are disordered; that stretch reads EEAPAEEDVAAEETSEAAEA.

This sequence belongs to the bacterial ribosomal protein bL9 family.

Binds to the 23S rRNA. This is Large ribosomal subunit protein bL9 from Paramagnetospirillum magneticum (strain ATCC 700264 / AMB-1) (Magnetospirillum magneticum).